Here is a 197-residue protein sequence, read N- to C-terminus: Ribosomal RNA large subunit methyltransferase E (197 aa).

Residues Gly50, Trp52, Asp70, Asp88, and Asp111 each coordinate S-adenosyl-L-methionine. Catalysis depends on Lys151, which acts as the Proton acceptor.

It belongs to the class I-like SAM-binding methyltransferase superfamily. RNA methyltransferase RlmE family.

Its subcellular location is the cytoplasm. The enzyme catalyses uridine(2552) in 23S rRNA + S-adenosyl-L-methionine = 2'-O-methyluridine(2552) in 23S rRNA + S-adenosyl-L-homocysteine + H(+). Specifically methylates the uridine in position 2552 of 23S rRNA at the 2'-O position of the ribose in the fully assembled 50S ribosomal subunit. The polypeptide is Ribosomal RNA large subunit methyltransferase E (Syntrophobacter fumaroxidans (strain DSM 10017 / MPOB)).